The primary structure comprises 496 residues: Bifunctional protein HldE (496 aa).

The ribokinase stretch occupies residues 1–331 (MDPTPALAEI…AAVHQEEVSA (331 aa)). 206-209 (NRKE) provides a ligand contact to ATP. Residue Asp-276 is part of the active site. Positions 358-496 (FTNGCFDLLH…GGSRRSGDTL (139 aa)) are cytidylyltransferase.

The protein in the N-terminal section; belongs to the carbohydrate kinase PfkB family. It in the C-terminal section; belongs to the cytidylyltransferase family. In terms of assembly, homodimer.

It carries out the reaction D-glycero-beta-D-manno-heptose 7-phosphate + ATP = D-glycero-beta-D-manno-heptose 1,7-bisphosphate + ADP + H(+). It catalyses the reaction D-glycero-beta-D-manno-heptose 1-phosphate + ATP + H(+) = ADP-D-glycero-beta-D-manno-heptose + diphosphate. It participates in nucleotide-sugar biosynthesis; ADP-L-glycero-beta-D-manno-heptose biosynthesis; ADP-L-glycero-beta-D-manno-heptose from D-glycero-beta-D-manno-heptose 7-phosphate: step 1/4. Its pathway is nucleotide-sugar biosynthesis; ADP-L-glycero-beta-D-manno-heptose biosynthesis; ADP-L-glycero-beta-D-manno-heptose from D-glycero-beta-D-manno-heptose 7-phosphate: step 3/4. Functionally, catalyzes the phosphorylation of D-glycero-D-manno-heptose 7-phosphate at the C-1 position to selectively form D-glycero-beta-D-manno-heptose-1,7-bisphosphate. In terms of biological role, catalyzes the ADP transfer from ATP to D-glycero-beta-D-manno-heptose 1-phosphate, yielding ADP-D-glycero-beta-D-manno-heptose. This is Bifunctional protein HldE from Rhodospirillum rubrum (strain ATCC 11170 / ATH 1.1.1 / DSM 467 / LMG 4362 / NCIMB 8255 / S1).